The following is a 284-amino-acid chain: 2,3,4,5-tetrahydropyridine-2,6-dicarboxylate N-succinyltransferase (284 aa).

Substrate-binding residues include R111 and D148.

Belongs to the transferase hexapeptide repeat family. In terms of assembly, homotrimer.

Its subcellular location is the cytoplasm. It carries out the reaction (S)-2,3,4,5-tetrahydrodipicolinate + succinyl-CoA + H2O = (S)-2-succinylamino-6-oxoheptanedioate + CoA. It functions in the pathway amino-acid biosynthesis; L-lysine biosynthesis via DAP pathway; LL-2,6-diaminopimelate from (S)-tetrahydrodipicolinate (succinylase route): step 1/3. This is 2,3,4,5-tetrahydropyridine-2,6-dicarboxylate N-succinyltransferase from Brucella suis (strain ATCC 23445 / NCTC 10510).